The chain runs to 226 residues: Cytochrome c oxidase subunit 2 (226 aa).

Over 1-25 (MNTWLLSLQNSNSPTYDMMIFFHDF) the chain is Mitochondrial intermembrane. Residues 26 to 47 (TMMILIFITLLILFIMFTMINN) traverse the membrane as a helical segment. The Mitochondrial matrix segment spans residues 48–61 (NLINRFLLQGHFIE). Residues 62-81 (LIWTITPMIILILIAIPSFK) traverse the membrane as a helical segment. Topologically, residues 82 to 226 (ILYLTDEMFN…YFKNWLKSFL (145 aa)) are mitochondrial intermembrane. Residues H160, C195, E197, C199, H203, and M206 each coordinate Cu cation. Residue E197 coordinates Mg(2+).

It belongs to the cytochrome c oxidase subunit 2 family. As to quaternary structure, component of the cytochrome c oxidase (complex IV, CIV), a multisubunit enzyme composed of a catalytic core of 3 subunits and several supernumerary subunits. The complex exists as a monomer or a dimer and forms supercomplexes (SCs) in the inner mitochondrial membrane with ubiquinol-cytochrome c oxidoreductase (cytochrome b-c1 complex, complex III, CIII). The cofactor is Cu cation.

It is found in the mitochondrion inner membrane. It catalyses the reaction 4 Fe(II)-[cytochrome c] + O2 + 8 H(+)(in) = 4 Fe(III)-[cytochrome c] + 2 H2O + 4 H(+)(out). Functionally, component of the cytochrome c oxidase, the last enzyme in the mitochondrial electron transport chain which drives oxidative phosphorylation. The respiratory chain contains 3 multisubunit complexes succinate dehydrogenase (complex II, CII), ubiquinol-cytochrome c oxidoreductase (cytochrome b-c1 complex, complex III, CIII) and cytochrome c oxidase (complex IV, CIV), that cooperate to transfer electrons derived from NADH and succinate to molecular oxygen, creating an electrochemical gradient over the inner membrane that drives transmembrane transport and the ATP synthase. Cytochrome c oxidase is the component of the respiratory chain that catalyzes the reduction of oxygen to water. Electrons originating from reduced cytochrome c in the intermembrane space (IMS) are transferred via the dinuclear copper A center (CU(A)) of subunit 2 and heme A of subunit 1 to the active site in subunit 1, a binuclear center (BNC) formed by heme A3 and copper B (CU(B)). The BNC reduces molecular oxygen to 2 water molecules using 4 electrons from cytochrome c in the IMS and 4 protons from the mitochondrial matrix. The polypeptide is Cytochrome c oxidase subunit 2 (COII) (Lasius sp).